The following is a 162-amino-acid chain: Probable E3 ubiquitin-protein ligase XERICO (162 aa).

Residues 12-28 (GMLCVILVNTALSISIV) traverse the membrane as a helical segment. The segment at 103–145 (CSVCLSKFQGDSEINKLKCGHLFHKTCLEKWIDYWNITCPLCR) adopts an RING-type; atypical zinc-finger fold.

As to quaternary structure, interacts with UBC8 and TULP9. As to expression, ubiquitous. Higher expression in actively growing tissues.

The protein localises to the membrane. It carries out the reaction S-ubiquitinyl-[E2 ubiquitin-conjugating enzyme]-L-cysteine + [acceptor protein]-L-lysine = [E2 ubiquitin-conjugating enzyme]-L-cysteine + N(6)-ubiquitinyl-[acceptor protein]-L-lysine.. Its pathway is protein modification; protein ubiquitination. Its function is as follows. Function on abscisic acid homeostasis at post-translational level, probably through ubiquitin/proteasome-dependent substrate-specific degradation. The protein is Probable E3 ubiquitin-protein ligase XERICO (XERICO) of Arabidopsis thaliana (Mouse-ear cress).